Reading from the N-terminus, the 183-residue chain is Chromophore lyase CpcT/CpeT 4 (183 aa).

The protein belongs to the CpcT/CpeT biliprotein lyase family.

Its function is as follows. Covalently attaches a chromophore to Cys residue(s) of phycobiliproteins. This chain is Chromophore lyase CpcT/CpeT 4, found in Gloeobacter violaceus (strain ATCC 29082 / PCC 7421).